The sequence spans 282 residues: Phenylethanolamine N-methyltransferase (282 aa).

Ser-7 is subject to Phosphoserine. S-adenosyl-L-methionine is bound by residues Tyr-35, Tyr-40, 79–80, Tyr-85, Asp-101, Asn-106, 158–159, and Ala-181; these read GS and DV. The octopamine site is built by Glu-219 and Asp-267.

It carries out the reaction phenylethanolamine + S-adenosyl-L-methionine = N-methylphenylethanolamine + S-adenosyl-L-homocysteine + H(+). The catalysed reaction is (R)-noradrenaline + S-adenosyl-L-methionine = (R)-adrenaline + S-adenosyl-L-homocysteine + H(+). The enzyme catalyses (R)-normetanephrine + S-adenosyl-L-methionine = (R)-metanephrine + S-adenosyl-L-homocysteine + H(+). It catalyses the reaction (R)-octopamine + S-adenosyl-L-methionine = (R)-synephrine + S-adenosyl-L-homocysteine + H(+). The protein operates within catecholamine biosynthesis; (R)-adrenaline biosynthesis; (R)-adrenaline from (R)-noradrenaline: step 1/1. Its activity is regulated as follows. Inhibited by methyl methanethiosulfonate, phenylglyoxal, tetranitromethane and diethyl pyrocarbonate. Inhibited by 4-oxo-1,4-dihydro-quinoline-3,7-dicarboxylic acid, 4-(benzo[d][1,3]dioxol-5-ylamino)-4-oxobutanoic acid and 1,4-diaminonaphthalene-2,6-disulfonic acid. Its function is as follows. Catalyzes the transmethylation of nonepinephrine (noradrenaline) to form epinephrine (adrenaline), using S-adenosyl-L-methionine as the methyl donor. Other substrates include phenylethanolamine and octopamine. Also methylates normetanephrine. This is Phenylethanolamine N-methyltransferase (PNMT) from Homo sapiens (Human).